The chain runs to 89 residues: Small ribosomal subunit protein uS14 (89 aa).

Belongs to the universal ribosomal protein uS14 family. In terms of assembly, part of the 30S ribosomal subunit. Contacts proteins S3 and S10.

Its function is as follows. Binds 16S rRNA, required for the assembly of 30S particles and may also be responsible for determining the conformation of the 16S rRNA at the A site. This chain is Small ribosomal subunit protein uS14, found in Chlorobium phaeovibrioides (strain DSM 265 / 1930) (Prosthecochloris vibrioformis (strain DSM 265)).